We begin with the raw amino-acid sequence, 165 residues long: Putative type II restriction enzyme and methyltransferase RM.MpnORF109P N-terminus (165 aa).

In terms of biological role, corresponds to the N-terminus of a putative G subtype type II restriction/methylase subunit. In Mycoplasma pneumoniae (strain ATCC 29342 / M129 / Subtype 1) (Mycoplasmoides pneumoniae), this protein is Putative type II restriction enzyme and methyltransferase RM.MpnORF109P N-terminus.